Reading from the N-terminus, the 674-residue chain is CRS2-associated factor 1, chloroplastic (674 aa).

Residues 1–54 constitute a chloroplast transit peptide; that stretch reads MATARLPSRSFLSPAQQSYPRLPASVRLCLSHHEQPPTGPKRHRRAATSHPAFS. The segment at 31–61 is disordered; sequence SHHEQPPTGPKRHRRAATSHPAFSAAARGRA. The span at 48–57 shows a compositional bias: low complexity; that stretch reads TSHPAFSAAA. CRM domains follow at residues 183 to 279 and 301 to 397; these read EPLT…TRPC and GGLT…LPPL. The tract at residues 554 to 576 is CRS2 binding; sequence GLLCLLEQAIHSGRALVLSEDEL.

Interacts with CRS2 and RNA. Part of large ribonucleo-protein complexes that include group IIB introns, CRS2 and CAF1.

The protein localises to the plastid. Its subcellular location is the chloroplast stroma. Required for the splicing of group IIB introns in chloroplasts. Forms splicing particles with CRS2. Interacts with RNA and confers intron specificity of the splicing particles. The chain is CRS2-associated factor 1, chloroplastic (CAF1) from Zea mays (Maize).